Consider the following 252-residue polypeptide: 3-dehydroquinate dehydratase (252 aa).

3-dehydroquinate contacts are provided by residues Glu46 to Arg48 and Arg82. His143 serves as the catalytic Proton donor/acceptor. The Schiff-base intermediate with substrate role is filled by Lys170. Residues Arg212, Ser231, and Gln235 each coordinate 3-dehydroquinate.

It belongs to the type-I 3-dehydroquinase family. As to quaternary structure, homodimer.

The enzyme catalyses 3-dehydroquinate = 3-dehydroshikimate + H2O. It functions in the pathway metabolic intermediate biosynthesis; chorismate biosynthesis; chorismate from D-erythrose 4-phosphate and phosphoenolpyruvate: step 3/7. Involved in the third step of the chorismate pathway, which leads to the biosynthesis of aromatic amino acids. Catalyzes the cis-dehydration of 3-dehydroquinate (DHQ) and introduces the first double bond of the aromatic ring to yield 3-dehydroshikimate. This Listeria monocytogenes serotype 4b (strain F2365) protein is 3-dehydroquinate dehydratase.